The primary structure comprises 548 residues: Tylosin resistance ATP-binding protein TlrC (548 aa).

ABC transporter domains are found at residues 9-265 and 347-547; these read LSLH…RRRQ and IATA…VSGA. Residues 41-48 and 387-394 contribute to the ATP site; these read GDNGAGKS and GPNGAGKS.

It belongs to the ABC transporter superfamily.

Its subcellular location is the cell membrane. Its function is as follows. Responsible for tylosin resistance, and is proposed to be a subunit of a multicomponent export system for the energy-dependent efflux of tylosin. This Streptomyces fradiae (Streptomyces roseoflavus) protein is Tylosin resistance ATP-binding protein TlrC (tlrC).